The primary structure comprises 50 residues: MKLVFLFFIVAVMVSLFVGMTEADKPRFLTTVCQDTYEKCKEQMLKKDKK.

The N-terminal stretch at 1–23 is a signal peptide; the sequence is MKLVFLFFIVAVMVSLFVGMTEA. A disulfide bridge links Cys33 with Cys40.

Belongs to the caterpillar 9 family. In terms of tissue distribution, expressed by the venom apparatus.

It is found in the secreted. Functionally, probable toxin. In Megalopyge opercularis (Southern flannel moth), this protein is U-megalopygitoxin(9)-Mo13.